Here is a 201-residue protein sequence, read N- to C-terminus: Recombination protein RecR (201 aa).

The segment at C57–C72 adopts a C4-type zinc-finger fold. In terms of domain architecture, Toprim spans T81–P176.

Belongs to the RecR family.

Functionally, may play a role in DNA repair. It seems to be involved in an RecBC-independent recombinational process of DNA repair. It may act with RecF and RecO. This is Recombination protein RecR from Colwellia psychrerythraea (strain 34H / ATCC BAA-681) (Vibrio psychroerythus).